The following is a 367-amino-acid chain: Alpha-2-HS-glycoprotein (367 aa).

Residues 1-18 (MKSLVLLLCLAQLWGCHS) form the signal peptide. A Cystatin fetuin-A-type 1 domain is found at 27–133 (YRQPNCDDPE…KFSVVYAKCD (107 aa)). Intrachain disulfides connect cysteine 32-cysteine 358, cysteine 89-cysteine 100, cysteine 114-cysteine 132, cysteine 146-cysteine 149, cysteine 208-cysteine 219, and cysteine 230-cysteine 247. Residue serine 134 is modified to Phosphoserine. A phosphoserine; by FAM20C mark is found at serine 135 and serine 138. Positions 144-255 (KVCQDCPLLA…TCMVFQTQPV (112 aa)) constitute a Cystatin fetuin-A-type 2 domain. Residues asparagine 156 and asparagine 176 are each glycosylated (N-linked (GlcNAc...) (complex) asparagine). The tract at residues 255 to 298 (VSSQPQPEGANEAVPTPVVDPDAPPSPPLGAPGLPPAGSPPDSH) is disordered. The O-linked (GalNAc...) threonine glycan is linked to threonine 270. Over residues 276–293 (DAPPSPPLGAPGLPPAGS) the composition is skewed to pro residues. Serine 280 and serine 293 each carry an O-linked (GalNAc...) serine glycan. Residues 301 to 340 (LAAPPGHQLHRAHYDLRHTFMGVVSLGSPSGEVSHPRKTR) constitute a propeptide, connecting peptide. Position 319 is a phosphothreonine; by FAM20C (threonine 319). Phosphoserine; by FAM20C occurs at positions 325, 328, and 330. O-linked (GalNAc...) threonine glycans are attached at residues threonine 339 and threonine 341. Serine 346 is a glycosylation site (O-linked (GalNAc...) serine).

It belongs to the fetuin family. As to quaternary structure, alpha-2-HS glycoprotein derives from this precursor, when the connecting peptide is cleaved off. The two chains A and B are held together by a single disulfide bond. In terms of processing, phosphorylated by FAM20C in the extracellular medium. O- and N-glycosylated. O-glycosylated with core 1 or possibly core 8 glycans. N-glycan at Asn-156: Hex5HexNAc4; N-glycan heterogeneity at Asn-176: Hex5HexNAc4 (major) and Hex6HexNAc5 (minor). Synthesized in liver and selectively concentrated in bone matrix. Secreted in plasma. It is also found in dentin in much higher quantities than other plasma proteins.

The protein resides in the secreted. Its function is as follows. Promotes endocytosis, possesses opsonic properties and influences the mineral phase of bone. Shows affinity for calcium and barium ions. The chain is Alpha-2-HS-glycoprotein (AHSG) from Homo sapiens (Human).